Reading from the N-terminus, the 487-residue chain is Ribosomal protein uS12 methylthiotransferase RimO (487 aa).

An MTTase N-terminal domain is found at 38–149; sequence PTVAFAHLGC…IVEVLEQVEA (112 aa). The [4Fe-4S] cluster site is built by cysteine 47, cysteine 83, cysteine 112, cysteine 187, cysteine 191, and cysteine 194. The region spanning 173–402 is the Radical SAM core domain; it reads TTSEAVAYLK…MEAQQAISAE (230 aa). The 72-residue stretch at 405–476 folds into the TRAM domain; it reads GAWVGRIVDV…IYDLEGEVVG (72 aa).

The protein belongs to the methylthiotransferase family. RimO subfamily. [4Fe-4S] cluster serves as cofactor.

Its subcellular location is the cytoplasm. The catalysed reaction is L-aspartate(89)-[ribosomal protein uS12]-hydrogen + (sulfur carrier)-SH + AH2 + 2 S-adenosyl-L-methionine = 3-methylsulfanyl-L-aspartate(89)-[ribosomal protein uS12]-hydrogen + (sulfur carrier)-H + 5'-deoxyadenosine + L-methionine + A + S-adenosyl-L-homocysteine + 2 H(+). Its function is as follows. Catalyzes the methylthiolation of an aspartic acid residue of ribosomal protein uS12. The polypeptide is Ribosomal protein uS12 methylthiotransferase RimO (Synechococcus sp. (strain RCC307)).